The following is a 156-amino-acid chain: MNINATLFAQIIVFFGLVWFTMKFVWPPIAKALDERAAKVAEGLAAAERGKSDFEQAEKKVAELLAEGRNQVSEMVANAEKRAAKIVEEAKEQASSEAARIAAQAKADVEQELFRARESLREQVAVLAVKGAESILRSEVDASKHAKLLDTLKQEL.

Residues 7 to 27 (LFAQIIVFFGLVWFTMKFVWP) traverse the membrane as a helical segment.

Belongs to the ATPase B chain family. F-type ATPases have 2 components, F(1) - the catalytic core - and F(0) - the membrane proton channel. F(1) has five subunits: alpha(3), beta(3), gamma(1), delta(1), epsilon(1). F(0) has three main subunits: a(1), b(2) and c(10-14). The alpha and beta chains form an alternating ring which encloses part of the gamma chain. F(1) is attached to F(0) by a central stalk formed by the gamma and epsilon chains, while a peripheral stalk is formed by the delta and b chains.

It localises to the cell inner membrane. Functionally, f(1)F(0) ATP synthase produces ATP from ADP in the presence of a proton or sodium gradient. F-type ATPases consist of two structural domains, F(1) containing the extramembraneous catalytic core and F(0) containing the membrane proton channel, linked together by a central stalk and a peripheral stalk. During catalysis, ATP synthesis in the catalytic domain of F(1) is coupled via a rotary mechanism of the central stalk subunits to proton translocation. Its function is as follows. Component of the F(0) channel, it forms part of the peripheral stalk, linking F(1) to F(0). In Neisseria meningitidis serogroup C (strain 053442), this protein is ATP synthase subunit b.